A 94-amino-acid chain; its full sequence is MDTKGILLVAVLTALLCLQSGDTLGASWHRPDKCCLGYQKRPLPQVLLSSWYPTSQLCSKPGVIFLTKRGRQVCADKSKDWVKKLMQQLPVTAR.

The signal sequence occupies residues 1 to 20 (MDTKGILLVAVLTALLCLQS). Cystine bridges form between cysteine 34–cysteine 58 and cysteine 35–cysteine 74.

This sequence belongs to the intercrine beta (chemokine CC) family. As to quaternary structure, monomer. Interacts with human chemokine receptor CXCR4.

Its subcellular location is the secreted. Its function is as follows. Blocks infection by several different human immunodeficiency virus type 1 (HIV-1) strains. This occurs because vMIP-II binds to a wide range of chemokine receptors. May form part of the response to host defenses contributing to virus-induced neoplasia and may have relevance to KSHV and HIV-I interactions. The chain is Viral macrophage inflammatory protein 2 (ORF K4) from Human herpesvirus 8 type P (isolate GK18) (HHV-8).